The following is a 379-amino-acid chain: Alcohol dehydrogenase class-2 isozyme 2 (379 aa).

C47, H69, C99, C102, C105, C113, and C176 together coordinate Zn(2+). Residues G205–G210, D229, K234, V298–V300, and R374 contribute to the NAD(+) site.

Belongs to the zinc-containing alcohol dehydrogenase family. Class-II subfamily. In terms of assembly, homodimer. The cofactor is Zn(2+).

The protein resides in the cytoplasm. It carries out the reaction a primary alcohol + NAD(+) = an aldehyde + NADH + H(+). The catalysed reaction is a secondary alcohol + NAD(+) = a ketone + NADH + H(+). The protein is Alcohol dehydrogenase class-2 isozyme 2 (ADH2-2) of Oryctolagus cuniculus (Rabbit).